Consider the following 178-residue polypeptide: Bryoporin (178 aa).

Residues S51, V83, S102, P104, and Y134 each contribute to the phosphocholine site. A trp-rich region region spans residues 101 to 117 (WSVPFDYNLYSNWWNIA).

This sequence belongs to the actinoporin family. Plant subfamily.

Its activity is regulated as follows. Inhibited by sphingomyelin. Functionally, actinoporin-related protein having hemolytic activity in vitro. Binds probably a phosphocholine derivative with the unique amido or hydroxyl groups found in sphingomyelin. Involved in drought tolerance. This chain is Bryoporin, found in Physcomitrium patens (Spreading-leaved earth moss).